A 115-amino-acid chain; its full sequence is Probable non-functional T cell receptor beta variable 7-1 (115 aa).

The first 21 residues, 1–21, serve as a signal peptide directing secretion; the sequence is MGTRLLCWAAICLLGADHTGA. The Ig-like domain maps to 22–115; sequence GVSQSLRHKV…LAVYLCASSS (94 aa).

As to quaternary structure, most probably, the alpha-beta TR is not assembled due to incorrect folding of the beta chain. Alpha-beta TR is a heterodimer composed of an alpha and beta chain; disulfide-linked. The alpha-beta TR is associated with the transmembrane signaling CD3 coreceptor proteins to form the TR-CD3 (TcR or TCR). The assembly of alpha-beta TR heterodimers with CD3 occurs in the endoplasmic reticulum where a single alpha-beta TR heterodimer associates with one CD3D-CD3E heterodimer, one CD3G-CD3E heterodimer and one CD247 homodimer forming a stable octameric structure. CD3D-CD3E and CD3G-CD3E heterodimers preferentially associate with TR alpha and TR beta chains, respectively. The association of the CD247 homodimer is the last step of TcR assembly in the endoplasmic reticulum and is required for transport to the cell surface.

It localises to the cell membrane. Its function is as follows. Probable non-functional open reading frame (ORF) of V region of the variable domain of T cell receptor (TR) beta chain. Non-functional ORF generally cannot participate in the synthesis of a productive T cell receptor (TR) chain due to altered V-(D)-J or switch recombination and/or splicing site (at mRNA level) and/or conserved amino acid change (protein level). Alpha-beta T cell receptors are antigen specific receptors which are essential to the immune response and are present on the cell surface of T lymphocytes. Recognize peptide-major histocompatibility (MH) (pMH) complexes that are displayed by antigen presenting cells (APC), a prerequisite for efficient T cell adaptive immunity against pathogens. Binding of alpha-beta TR to pMH complex initiates TR-CD3 clustering on the cell surface and intracellular activation of LCK that phosphorylates the ITAM motifs of CD3G, CD3D, CD3E and CD247 enabling the recruitment of ZAP70. In turn ZAP70 phosphorylates LAT, which recruits numerous signaling molecules to form the LAT signalosome. The LAT signalosome propagates signal branching to three major signaling pathways, the calcium, the mitogen-activated protein kinase (MAPK) kinase and the nuclear factor NF-kappa-B (NF-kB) pathways, leading to the mobilization of transcription factors that are critical for gene expression and essential for T cell growth and differentiation. The T cell repertoire is generated in the thymus, by V-(D)-J rearrangement. This repertoire is then shaped by intrathymic selection events to generate a peripheral T cell pool of self-MH restricted, non-autoaggressive T cells. Post-thymic interaction of alpha-beta TR with the pMH complexes shapes TR structural and functional avidity. In Homo sapiens (Human), this protein is Probable non-functional T cell receptor beta variable 7-1.